The chain runs to 874 residues: Alanine--tRNA ligase (874 aa).

The Zn(2+) site is built by H563, H567, C665, and H669.

Belongs to the class-II aminoacyl-tRNA synthetase family. Zn(2+) is required as a cofactor.

It is found in the cytoplasm. It carries out the reaction tRNA(Ala) + L-alanine + ATP = L-alanyl-tRNA(Ala) + AMP + diphosphate. Functionally, catalyzes the attachment of alanine to tRNA(Ala) in a two-step reaction: alanine is first activated by ATP to form Ala-AMP and then transferred to the acceptor end of tRNA(Ala). Also edits incorrectly charged Ser-tRNA(Ala) and Gly-tRNA(Ala) via its editing domain. The protein is Alanine--tRNA ligase of Actinobacillus pleuropneumoniae serotype 5b (strain L20).